Here is a 345-residue protein sequence, read N- to C-terminus: tRNA N6-adenosine threonylcarbamoyltransferase (345 aa).

Fe cation-binding residues include H117 and H121. Substrate-binding positions include 140-144 (LVSGG), D173, G186, and N279. D307 contacts Fe cation.

The protein belongs to the KAE1 / TsaD family. Requires Fe(2+) as cofactor.

The protein resides in the cytoplasm. It carries out the reaction L-threonylcarbamoyladenylate + adenosine(37) in tRNA = N(6)-L-threonylcarbamoyladenosine(37) in tRNA + AMP + H(+). In terms of biological role, required for the formation of a threonylcarbamoyl group on adenosine at position 37 (t(6)A37) in tRNAs that read codons beginning with adenine. Is involved in the transfer of the threonylcarbamoyl moiety of threonylcarbamoyl-AMP (TC-AMP) to the N6 group of A37, together with TsaE and TsaB. TsaD likely plays a direct catalytic role in this reaction. This chain is tRNA N6-adenosine threonylcarbamoyltransferase, found in Verminephrobacter eiseniae (strain EF01-2).